The primary structure comprises 593 residues: Aspartate--tRNA ligase (593 aa).

Glu180 is an L-aspartate binding site. An aspartate region spans residues 204–207 (QIFK). Residue Arg226 participates in L-aspartate binding. ATP-binding positions include 226–228 (RDE) and Gln235. His453 contacts L-aspartate. Glu487 is an ATP binding site. Arg494 is an L-aspartate binding site. ATP is bound at residue 539-542 (GLDR).

It belongs to the class-II aminoacyl-tRNA synthetase family. Type 1 subfamily. As to quaternary structure, homodimer.

It is found in the cytoplasm. It carries out the reaction tRNA(Asp) + L-aspartate + ATP = L-aspartyl-tRNA(Asp) + AMP + diphosphate. Functionally, catalyzes the attachment of L-aspartate to tRNA(Asp) in a two-step reaction: L-aspartate is first activated by ATP to form Asp-AMP and then transferred to the acceptor end of tRNA(Asp). The protein is Aspartate--tRNA ligase of Clostridium botulinum (strain Okra / Type B1).